The following is a 329-amino-acid chain: Dolichyl-diphosphooligosaccharide--protein glycosyltransferase subunit MAGT1 (329 aa).

Residues 1–23 (MAGLKGLLFGGILFAMCGGLSEG) form the signal peptide. Topologically, residues 24 to 178 (QKKKEMVLSD…DVNIRVIRPP (155 aa)) are extracellular. The 129-residue stretch at 41-169 (WASKRPVIRM…LARWVADRTD (129 aa)) folds into the Thioredoxin domain. Residue Asn-65 is glycosylated (N-linked (GlcNAc...) asparagine). A disulfide bond links Cys-81 and Cys-84. A helical transmembrane segment spans residues 179 to 199 (NYAGPLMLGLLLAVIGGLVYL). The Cytoplasmic segment spans residues 200-212 (RRSNLDFLNNKTG). A helical transmembrane segment spans residues 213–233 (WALAALCFVLAMTSGQMWNHI). At 234 to 258 (RGPPYAHKNPHTNQVNYIHGSSQAQ) the chain is on the extracellular side. A helical transmembrane segment spans residues 259–279 (FVAETHIVLLFNGAVTLGMVL). At 280–294 (LHEAATSDLDVGKRK) the chain is on the cytoplasmic side. Residues 295–315 (IMCIAGITLVVIFFSWLLSVF) form a helical membrane-spanning segment. Topologically, residues 316-329 (RSKYHGYPYSFLMT) are extracellular.

Belongs to the OST3/OST6 family. Accessory component of the STT3B-containing form of the oligosaccharyltransferase (OST) complex.

The protein resides in the cell membrane. The protein localises to the endoplasmic reticulum. It is found in the endoplasmic reticulum membrane. Its pathway is protein modification; protein glycosylation. Accessory component of the STT3B-containing form of the N-oligosaccharyl transferase (OST) complex which catalyzes the transfer of a high mannose oligosaccharide from a lipid-linked oligosaccharide donor to an asparagine residue within an Asn-X-Ser/Thr consensus motif in nascent polypeptide chains. May be involved in substrate-specific N-glycosylation involving acceptor sites that are near cysteine residues. Could indirectly play a role in Mg(2+) transport in epithelial cells. In Xenopus laevis (African clawed frog), this protein is Dolichyl-diphosphooligosaccharide--protein glycosyltransferase subunit MAGT1.